Consider the following 337-residue polypeptide: Probable cytosolic iron-sulfur protein assembly protein CIAO1 homolog (337 aa).

7 WD repeats span residues 15–54, 65–104, 109–148, 154–193, 199–238, 253–292, and 301–337; these read DDTS…DSKM, SHTR…FAEV, GHES…DFSV, PHTQ…WVTQ, CHVG…SKSA, NTRW…ESPV, and RHEL…ELEI.

It belongs to the WD repeat CIA1 family.

Functionally, essential component of the cytosolic iron-sulfur (Fe/S) protein assembly machinery. Required for the maturation of extramitochondrial Fe/S proteins. The sequence is that of Probable cytosolic iron-sulfur protein assembly protein CIAO1 homolog from Caenorhabditis elegans.